We begin with the raw amino-acid sequence, 216 residues long: Probable inactive E3 ubiquitin-protein ligase SINAT6 (216 aa).

The segment at 5-74 (INDLQVESRV…LLLHLRNDHN (70 aa)) adopts an SIAH-type zinc-finger fold.

This sequence belongs to the SINA (Seven in absentia) family. As to quaternary structure, homodimer. Interacts with SINAT1, SINAT2, SINAT3, SINAT4 and SINAT5. Interacts with ATG6 and TRAF1A. As to expression, expressed in roots, rosette leaves, cauline leaves, guard cells and flowers.

It is found in the cytoplasm. The protein resides in the nucleus. Probable inactive E3 ubiquitin-protein ligase that plays a role in regulation of autophagy. Upon starvation, involved in maintaining ATG6 homeostasis by competitively associating with ATG6, a component of the autophagosome complex. Acts as a positive regulator of drought stress response. Functions as a positive regulator of abscisic acid-mediated stomatal closure. This chain is Probable inactive E3 ubiquitin-protein ligase SINAT6, found in Arabidopsis thaliana (Mouse-ear cress).